The sequence spans 305 residues: Peroxisome biogenesis factor 2 (305 aa).

The Peroxisomal matrix segment spans residues 1–15 (MASRKENAKSANRVL). The chain crosses the membrane as a helical span at residues 16-42 (RISQLDALELNKALEQLVWSQFTQCFH). The Cytoplasmic segment spans residues 43-48 (GFKPGL). Residues 49–74 (LARFEPEVKACLWVFLWRFTIYSKNA) form a helical membrane-spanning segment. Topologically, residues 75–98 (TVGQSVLNIKYKNDFSPNLRYQPP) are peroxisomal matrix. Lys84 is subject to N6-acetyllysine. Residues 99 to 125 (SKNQKIWYAVCTIGGRWLEERCYDLFR) traverse the membrane as a helical segment. Residues 126–133 (NHHLASFG) lie on the Cytoplasmic side of the membrane. Residues 134–160 (KVKQCVNFVIGLLKLGGLINFLIFLQR) traverse the membrane as a helical segment. Topologically, residues 161–187 (GKFATLTERLLGIHSVFCKPQNICEVG) are peroxisomal matrix. Residues 188-211 (FEYMNRELLWHGFAEFLIFLLPLI) form a helical membrane-spanning segment. The Cytoplasmic portion of the chain corresponds to 212 to 305 (NVQKLKAKLS…GIEMSEVNAL (94 aa)). The Zn(2+) site is built by Cys244, Cys247, Cys259, His261, Cys264, Cys267, Cys280, and Cys283. The RING-type zinc-finger motif lies at 244–284 (CALCGEWPTMPHTIGCEHIFCYFCAKSSFLFDVYFTCPKCG).

The protein belongs to the pex2/pex10/pex12 family. As to quaternary structure, component of the PEX2-PEX10-PEX12 retrotranslocation channel, composed of PEX2, PEX10 and PEX12. In terms of processing, forms intramolecular and intermolecular disulfide bonds in response to reactive oxygen species (ROS), promoting higher stability.

It localises to the peroxisome membrane. The enzyme catalyses [E2 ubiquitin-conjugating enzyme]-S-ubiquitinyl-L-cysteine + [acceptor protein]-L-cysteine = [E2 ubiquitin-conjugating enzyme]-L-cysteine + [acceptor protein]-S-ubiquitinyl-L-cysteine.. It catalyses the reaction S-ubiquitinyl-[E2 ubiquitin-conjugating enzyme]-L-cysteine + [acceptor protein]-L-lysine = [E2 ubiquitin-conjugating enzyme]-L-cysteine + N(6)-ubiquitinyl-[acceptor protein]-L-lysine.. It functions in the pathway protein modification; protein ubiquitination. Its function is as follows. E3 ubiquitin-protein ligase component of a retrotranslocation channel required for peroxisome organization by mediating export of the PEX5 receptor from peroxisomes to the cytosol, thereby promoting PEX5 recycling. The retrotranslocation channel is composed of PEX2, PEX10 and PEX12; each subunit contributing transmembrane segments that coassemble into an open channel that specifically allows the passage of PEX5 through the peroxisomal membrane. PEX2 also regulates peroxisome organization by acting as a E3 ubiquitin-protein ligase. PEX2 ubiquitinates PEX5 during its passage through the retrotranslocation channel: catalyzes monoubiquitination of PEX5 at 'Cys-11', a modification that acts as a signal for PEX5 extraction into the cytosol. Required for pexophagy in response to starvation by mediating ubiquitination of peroxisomal proteins, such as PEX5 and ABCD3/PMP70. Also involved in the response to reactive oxygen species (ROS) by mediating 'Lys-48'-linked polyubiquitination and subsequent degradation of PNPLA2/ATGL, thereby regulating lipolysis. In Homo sapiens (Human), this protein is Peroxisome biogenesis factor 2.